Consider the following 55-residue polypeptide: Large ribosomal subunit protein bL33B (55 aa).

The protein belongs to the bacterial ribosomal protein bL33 family.

This chain is Large ribosomal subunit protein bL33B, found in Mycobacteroides abscessus (strain ATCC 19977 / DSM 44196 / CCUG 20993 / CIP 104536 / JCM 13569 / NCTC 13031 / TMC 1543 / L948) (Mycobacterium abscessus).